A 376-amino-acid chain; its full sequence is 23S rRNA (uracil(747)-C(5))-methyltransferase RlmC (376 aa).

[4Fe-4S] cluster is bound by residues C3, C11, C14, and C87. S-adenosyl-L-methionine-binding residues include Q212, F241, E262, and N307. The active-site Nucleophile is C334.

It belongs to the class I-like SAM-binding methyltransferase superfamily. RNA M5U methyltransferase family. RlmC subfamily.

It catalyses the reaction uridine(747) in 23S rRNA + S-adenosyl-L-methionine = 5-methyluridine(747) in 23S rRNA + S-adenosyl-L-homocysteine + H(+). Its function is as follows. Catalyzes the formation of 5-methyl-uridine at position 747 (m5U747) in 23S rRNA. The protein is 23S rRNA (uracil(747)-C(5))-methyltransferase RlmC of Salmonella typhimurium (strain LT2 / SGSC1412 / ATCC 700720).